Reading from the N-terminus, the 151-residue chain is Large ribosomal subunit protein bL9 (151 aa).

This sequence belongs to the bacterial ribosomal protein bL9 family.

Binds to the 23S rRNA. This Chlorobium luteolum (strain DSM 273 / BCRC 81028 / 2530) (Pelodictyon luteolum) protein is Large ribosomal subunit protein bL9.